A 92-amino-acid chain; its full sequence is Small ribosomal subunit protein bS18 (92 aa).

This sequence belongs to the bacterial ribosomal protein bS18 family. As to quaternary structure, part of the 30S ribosomal subunit. Forms a tight heterodimer with protein bS6.

Functionally, binds as a heterodimer with protein bS6 to the central domain of the 16S rRNA, where it helps stabilize the platform of the 30S subunit. This chain is Small ribosomal subunit protein bS18, found in Pelagibacter ubique (strain HTCC1062).